A 342-amino-acid chain; its full sequence is MAYSTDHDVVLDFPILIGDIGGTNARFAIVVDSYAEPREFPVVQTADFATIEDAIQTAILDQTHLIPRSAVLAVAGPVNGDEIDLTNSNWVVRPREMMAHLGFSDIVVLNDFEAQALAVVALGEEHLEKIGGNVAETVGSRVVLGPGTGLGVAGLVHARRTWIPVPGEGGHMDLGPRTARDEQIFPHLERIEGRVSGEQVLCGRGLVNLYRAIAKADAKEAAFSSPAEITTAGLAQADEIAVETLNLFVTYLGRVAGDLGLVFMSRGGVFLTGGIAQKIVPALKNSLFRAAFEDKAPHNELMASMPVYVITHPLAALHGLAAYARTPARFGVETAGRRWRLR.

18 to 23 serves as a coordination point for ATP; the sequence is GDIGGT.

This sequence belongs to the bacterial glucokinase family.

The protein resides in the cytoplasm. The enzyme catalyses D-glucose + ATP = D-glucose 6-phosphate + ADP + H(+). This is Glucokinase from Chelativorans sp. (strain BNC1).